Reading from the N-terminus, the 295-residue chain is uncharacterized protein (295 aa).

The signal sequence occupies residues 1–19 (MRKLLLIITVFFTFNVAQA).

This is an uncharacterized protein from Rickettsia conorii (strain ATCC VR-613 / Malish 7).